Consider the following 267-residue polypeptide: Serine/arginine-rich splicing factor 7 (267 aa).

The region spanning 40-113 (TKVYVGNLGT…SRVRVELSTG (74 aa)) is the RRM domain. The residue at position 53 (lysine 53) is an N6-acetyllysine; alternate. A Glycyl lysine isopeptide (Lys-Gly) (interchain with G-Cter in SUMO2); alternate cross-link involves residue lysine 53. Residue serine 61 is modified to Phosphoserine. The tract at residues 110–127 (LSTGMPRRSRFDRPPARR) is sufficient for interaction with NXF1. Residues 133–150 (DRCYECGEKGHYAYDCHR) form a CCHC-type zinc finger. Residues 152–209 (SRRRRSRSRSRSHSRSRGRRYSRSRSRSRGRRSRSASPRRSRSVSLRRSRSASLRRSR) show a composition bias toward basic residues. Residues 152-267 (SRRRRSRSRS…HRSASPERMD (116 aa)) are disordered. A run of 4 repeats spans residues 182–189 (RRSRSASP), 190–197 (RRSRSVSL), 198–205 (RRSRSASL), and 206–213 (RRSRSGSI). The 6 X 8 AA repeats of R-R-S-R-S-X-S-X stretch occupies residues 182–255 (RRSRSASPRR…SPKRSRSPSG (74 aa)). Phosphoserine occurs at positions 192, 194, and 196. A phosphoserine mark is found at serine 210, serine 212, serine 221, serine 223, and serine 225. Over residues 223–251 (SRSRSRSRSISRPRSSRSKSRSPSPKRSR) the composition is skewed to basic residues. Residues 240–247 (SKSRSPSP) form a 5; approximate repeat. A 6; approximate repeat occupies 248–255 (KRSRSPSG). Residues serine 260 and serine 262 each carry the phosphoserine modification.

It belongs to the splicing factor SR family. Found in large molecular weight complexes containing CCNL1 and the p110 isoforms of either CDC2L1 or CDC2L2. Interacts with CCNL2 and CPSF6. Interacts with NXF1. Interacts with YTHDC1. Extensively phosphorylated on serine residues in the RS domain.

The protein localises to the nucleus. Its subcellular location is the cytoplasm. Required for pre-mRNA splicing. Represses the splicing of MAPT/Tau exon 10. May function as export adapter involved in mRNA nuclear export such as of histone H2A. Binds mRNA which is thought to be transferred to the NXF1-NXT1 heterodimer for export (TAP/NXF1 pathway); enhances NXF1-NXT1 RNA-binding activity. RNA-binding is semi-sequence specific. The sequence is that of Serine/arginine-rich splicing factor 7 (Srsf7) from Mus musculus (Mouse).